The sequence spans 391 residues: Acetyl-CoA acetyltransferase (391 aa).

Cysteine 88 acts as the Acyl-thioester intermediate in catalysis. Residues histidine 347 and cysteine 377 each act as proton acceptor in the active site.

Belongs to the thiolase-like superfamily. Thiolase family. Homotetramer.

Its subcellular location is the cytoplasm. It catalyses the reaction 2 acetyl-CoA = acetoacetyl-CoA + CoA. It participates in metabolic intermediate biosynthesis; (R)-mevalonate biosynthesis; (R)-mevalonate from acetyl-CoA: step 1/3. The sequence is that of Acetyl-CoA acetyltransferase (phaA) from Paracoccus denitrificans.